The chain runs to 917 residues: Phosphoenolpyruvate carboxylase (917 aa).

Active-site residues include histidine 145 and lysine 578.

This sequence belongs to the PEPCase type 1 family. Requires Mg(2+) as cofactor.

The catalysed reaction is oxaloacetate + phosphate = phosphoenolpyruvate + hydrogencarbonate. In terms of biological role, forms oxaloacetate, a four-carbon dicarboxylic acid source for the tricarboxylic acid cycle. The polypeptide is Phosphoenolpyruvate carboxylase (Azoarcus sp. (strain BH72)).